We begin with the raw amino-acid sequence, 242 residues long: Copper transport protein B (242 aa).

A run of 2 helical transmembrane segments spans residues 8-28 and 86-106; these read ICLC…ACVL and ITGP…TAGY. The segment at 153–175 is disordered; that stretch reads ESATTNVPSSQTPNESSPLVAGR. Over residues 154–169 the composition is skewed to polar residues; sequence SATTNVPSSQTPNESS. 2 consecutive transmembrane segments (helical) span residues 187 to 207 and 210 to 230; these read IILA…MLLF and YNGF…LVFG.

Belongs to the copper transporter (Ctr) (TC 1.A.56) family. SLC31A subfamily.

The protein resides in the membrane. Its function is as follows. Transporter that is probably involved in the transport of copper, even if it does not act as a major copper transporter. In Aspergillus fumigatus (strain ATCC MYA-4609 / CBS 101355 / FGSC A1100 / Af293) (Neosartorya fumigata), this protein is Copper transport protein B.